The following is an 841-amino-acid chain: MAPPAASQRYPSPSQPSGKSEVSDLKTQLRQLAGSRAPGVDDSKRDLYKKVISYMTIGIDVSSVFGEMVMCSATSDIVLKKMCYLYVGNYAKGNPDLSLLTINFLQRDCKDEDPMIRGLALRSLCSLRVPNLVEYLVGPLGSGLKDNNSYVRTIAVTGVLKLYHISPSTCIDADFPATLKSLMLHDSDAQVVANCLSALQEIWSLEASHSEEACREKESLLSKPVIYYFLNRIKEFNEWAQCLILELAVKYVPSDSNDIFDIMNLLEDRLQHANGAVVLATVKVFLQLTLSMTDVHQQVYERIKSPLLTLVSSGSPEQSYAILSHLHLLVVRAPFIFAADYKHFYCQYNEPSYVKKLKLEMLTAVANESNTYEIVTELCEYAANVDIAIARESIRAVGKIALQQYDVNAIVDRLLQFLEMEKDYVTAETLVLVKDLLRKYPQWSHDCISVVGGISSKNIQEPKAKAALIWMLGEYAQDMSDAPYVLENLIENWEEEHSAEVRLHLLTAAMKCFFKRAPETQKALGTALAAGIADFHQDVHDRALFYYRVLQYDVHVAERVVSPPKQAVSVFADTQSSEIKDRVFDEFNSLSVIYQKPSYMFTDKEHRGPFEFSDEVGNISITPEASSDIVPAQQYEANDKDLLLGIDEKDENKGVSNNNGSAYTAPSLESSSNITSQMQELAISGPATSATTPQSFGFDDLFGLGLSTAPAPTPSPPLLKLNARAALDPGAFQQKWRQLPISLTQECSVNPQGIAALTVPQSLIKHMQSHSIHCIASGGQSPNFKFFFFAQKESEPSNYLTECIINTSSAKAQIKVKADEQSTCQAFTTVFETALSKFGMP.

Disordered regions lie at residues 1 to 25 (MAPP…VSDL) and 650 to 671 (DENK…LESS). Polar residues-rich tracts occupy residues 9–25 (RYPS…VSDL) and 654–671 (GVSN…LESS).

The protein belongs to the adaptor complexes large subunit family. In terms of assembly, adaptor protein complexes are heterotetramers composed of two large adaptins (beta-type subunit and alpha-type or delta-type or epsilon-type or gamma-type subunit), a medium adaptin (mu-type subunit) and a small adaptin (sigma-type subunit). Interacts with AHK2.

It is found in the golgi apparatus. It localises to the trans-Golgi network. Its subcellular location is the cytoplasmic vesicle. The protein localises to the clathrin-coated vesicle membrane. Subunit of clathrin-associated adaptor protein complex that plays a role in protein sorting in the late-Golgi/trans-Golgi network (TGN) and/or endosomes. The AP complexes mediate both the recruitment of clathrin to membranes and the recognition of sorting signals within the cytosolic tails of transmembrane cargo molecules. The chain is Beta-adaptin-like protein A (BETAA-AD) from Arabidopsis thaliana (Mouse-ear cress).